The sequence spans 213 residues: Orotate phosphoribosyltransferase (213 aa).

A 5-phospho-alpha-D-ribose 1-diphosphate-binding site is contributed by Lys-26. Residue Phe-34–Phe-35 participates in orotate binding. 5-phospho-alpha-D-ribose 1-diphosphate is bound by residues Tyr-72–Lys-73, Arg-99, Lys-100, Lys-103, His-105, and Asp-124–Ala-132. Orotate-binding residues include Thr-128 and Arg-156.

It belongs to the purine/pyrimidine phosphoribosyltransferase family. PyrE subfamily. In terms of assembly, homodimer. It depends on Mg(2+) as a cofactor.

It catalyses the reaction orotidine 5'-phosphate + diphosphate = orotate + 5-phospho-alpha-D-ribose 1-diphosphate. It functions in the pathway pyrimidine metabolism; UMP biosynthesis via de novo pathway; UMP from orotate: step 1/2. Catalyzes the transfer of a ribosyl phosphate group from 5-phosphoribose 1-diphosphate to orotate, leading to the formation of orotidine monophosphate (OMP). In Shigella sonnei (strain Ss046), this protein is Orotate phosphoribosyltransferase.